A 141-amino-acid polypeptide reads, in one-letter code: Transcription antitermination protein NusB (141 aa).

This sequence belongs to the NusB family.

Functionally, involved in transcription antitermination. Required for transcription of ribosomal RNA (rRNA) genes. Binds specifically to the boxA antiterminator sequence of the ribosomal RNA (rrn) operons. The polypeptide is Transcription antitermination protein NusB (Neisseria meningitidis serogroup C (strain 053442)).